Consider the following 712-residue polypeptide: Voltage-gated chloride channel TMC4 (712 aa).

The segment at 1 to 39 is disordered; sequence MEENPTLESEAWGSSRGWLAPREARGAPCSSPGPSLSSV. Residues 1–168 lie on the Extracellular side of the membrane; that stretch reads MEENPTLESE…GTESYFSLLR (168 aa). The N-linked (GlcNAc...) asparagine glycan is linked to asparagine 107. The helical transmembrane segment at 169–189 threads the bilayer; it reads FLLLLNVLASVLMACMTLLPT. Over 190–249 the chain is Cytoplasmic; it reads WLGGAPPGPPGPDISSPCGSYNPHSQGLVTFATQLFNLLSGEGYLEWSPLFYGFYPPRPR. The chain crosses the membrane as a helical span at residues 250 to 270; that stretch reads LAVTYLCWAFAVGLICLLLIL. Topologically, residues 271 to 348 are extracellular; sequence HRSVSGLKQT…GQQARVWLVR (78 aa). Residues 349–369 traverse the membrane as a helical segment; it reads VLLNLLVVALLGAAFYGVYWA. Topologically, residues 370–394 are cytoplasmic; the sequence is TGCTVELQEMPLVQELPLLKLGVNY. The chain crosses the membrane as a helical span at residues 395–415; it reads LPSIFIAGVNFVLPPVFKLIA. Residues 416–425 lie on the Extracellular side of the membrane; sequence PLEGYTRSRQ. The helical transmembrane segment at 426 to 446 threads the bilayer; it reads IVFILLRTVFLRLASLVVLLF. Residues 447-483 are Cytoplasmic-facing; it reads SLWNQITCGGDSEAEDCKTCGYNYKQLPCWETVLGQE. The chain crosses the membrane as a helical span at residues 484–504; it reads MYKLLLFDLLTVLAVALLIQF. Topologically, residues 505 to 542 are extracellular; sequence PRKLLCGLCPGALGRLAGTQEFQVPDEVLGLIYAQTVV. The helical transmembrane segment at 543–565 threads the bilayer; the sequence is WVGSFFCPLLPLLNTVKFLLLFY. Residues 566–592 are Cytoplasmic-facing; that stretch reads LKKLTLFSTCSPAARTFRASAANFFFP. Residues 593 to 613 traverse the membrane as a helical segment; it reads LVLLLGLAISSVPLLYSIFLI. Residues 614 to 654 lie on the Extracellular side of the membrane; sequence PPSKLCGPFRGQSSIWAQIPESISSLPETTQNFLFFLGTQA. Residues 655–677 traverse the membrane as a helical segment; the sequence is FAVPLLLISSILMAYTVALANSY. Over 678 to 712 the chain is Cytoplasmic; that stretch reads GRLISELKRQRQTEAQNKVFLARRAVALTSTKPAL.

Belongs to the TMC family.

It localises to the membrane. It catalyses the reaction chloride(in) = chloride(out). Voltage-gated chloride channel involved in high-concentration salt taste sensation. Depolarization induced by high NaCl concentration may trigger the activation of TMC4-mediated chloride influx into taste bud cells, helping the return to resting potential. Also allows permeation of organic anions including gluconate, but their current amplitudes at positive potentials are less than that of chloride. Involved in pH and temperature-dependent modulation of salty taste. The polypeptide is Voltage-gated chloride channel TMC4 (Homo sapiens (Human)).